Here is a 505-residue protein sequence, read N- to C-terminus: Protein disulfide-isomerase A3 (505 aa).

The first 24 residues, 1–24 (MSVPRPSRAALLLLVPLLALSAGA), serve as a signal peptide directing secretion. Thioredoxin domains lie at 25 to 131 (SDVV…KQAG) and 341 to 483 (SRDG…REAT). Active-site nucleophile residues include Cys-55 and Cys-58. Disulfide bonds link Cys-55-Cys-58, Cys-83-Cys-90, and Cys-404-Cys-407. Catalysis depends on nucleophile residues Cys-404 and Cys-407. The segment at 486–505 (PVLQEEDKAKKSKKKAKEDL) is disordered. Over residues 495–505 (KKSKKKAKEDL) the composition is skewed to basic residues. Residues 502 to 505 (KEDL) carry the Prevents secretion from ER motif.

This sequence belongs to the protein disulfide isomerase family.

The protein resides in the endoplasmic reticulum. It localises to the endoplasmic reticulum lumen. The protein localises to the melanosome. It catalyses the reaction Catalyzes the rearrangement of -S-S- bonds in proteins.. Its function is as follows. Protein disulfide isomerase that catalyzes the formation, isomerization, and reduction or oxidation of disulfide bonds in client proteins and functions as a protein folding chaperone. The polypeptide is Protein disulfide-isomerase A3 (PDIA3) (Gallus gallus (Chicken)).